The following is a 476-amino-acid chain: Lactate utilization protein B (476 aa).

4Fe-4S ferredoxin-type domains lie at 304-334 and 353-382; these read GTEFQPVLQCIRCAACVNVCPVYRHIGGHSY and YDDYKELPYASSLCAACTEVCPVKIPLHEL. 7 residues coordinate [4Fe-4S] cluster: Cys313, Cys316, Cys319, Cys323, Cys366, Cys369, and Cys373.

It belongs to the LutB/YkgF family.

Is involved in L-lactate degradation and allows cells to grow with lactate as the sole carbon source. Has probably a role as an electron transporter during oxidation of L-lactate. The chain is Lactate utilization protein B from Geobacillus thermodenitrificans (strain NG80-2).